Consider the following 358-residue polypeptide: MAPATPATHDPALSHGAPPAPGAPAPANAPPNASGDIAGMQLSGLDQSQIMNLLRSLPGMFSGGKIPDQGQGNKEDAAQTLSNLAQAQPYGQQLPLHYQAGGPGGLPGINDPGPSTHPRGPPNLGQLSAVAMQAAPAPIQHPDQQTNRNDGEQAGNASASTSGKDGDNAEFVPPPAPAPTTGRRGGRSATMGSDEWSRQRKDNHKEVERRRRGNINEGINELGRIVPSGSGEKAKGAILSRAVQYIHHLKENEARNIEKWTLEKLLMDQAMGDLQAQLEEVKRLWEEERMARTRLEAELEVLRNMNGVNAGSAPASKDESAAGTKRRSTDGAEAATAATESSTANAEGERDGKRQRTE.

Disordered stretches follow at residues 1-40 (MAPA…IAGM) and 62-212 (SGGK…RRRR). Residues 18-29 (PPAPGAPAPANA) are compositionally biased toward pro residues. Positions 79–91 (QTLSNLAQAQPYG) are enriched in polar residues. A compositionally biased stretch (low complexity) spans 179-190 (PTTGRRGGRSAT). Positions 195–209 (EWSRQRKDNHKEVER) are enriched in basic and acidic residues. The tract at residues 199–212 (QRKDNHKEVERRRR) is basic motif. Residues 199-249 (QRKDNHKEVERRRRGNINEGINELGRIVPSGSGEKAKGAILSRAVQYIHHL) form the bHLH domain. The segment at 213–249 (GNINEGINELGRIVPSGSGEKAKGAILSRAVQYIHHL) is helix-loop-helix motif. A coiled-coil region spans residues 264–306 (KLLMDQAMGDLQAQLEEVKRLWEEERMARTRLEAELEVLRNMN). Residues 308–358 (VNAGSAPASKDESAAGTKRRSTDGAEAATAATESSTANAEGERDGKRQRTE) are disordered. Low complexity predominate over residues 331 to 346 (GAEAATAATESSTANA). Positions 347–358 (EGERDGKRQRTE) are enriched in basic and acidic residues.

It localises to the nucleus. Its function is as follows. Transcription factor that may regulate the expression of the gene cluster that mediates the biosynthesis of psilocybin, a psychotropic tryptamine-derived natural product. This is Psilocybin cluster transcription regulator from Psilocybe cubensis (Psychedelic mushroom).